A 251-amino-acid chain; its full sequence is Protein CMS1 (251 aa).

The disordered stretch occupies residues 1 to 37; that stretch reads MSLDNDINTKKRKLQDDEKPRKKRKHKRPTRDDDADL.

The protein belongs to the CMS1 family.

It is found in the nucleus. In terms of biological role, may play a role in the regulation of DNA replication and cell cycle control. The protein is Protein CMS1 (CSM1) of Chaetomium thermophilum (strain DSM 1495 / CBS 144.50 / IMI 039719) (Thermochaetoides thermophila).